The chain runs to 271 residues: Putative phosphoenolpyruvate synthase regulatory protein (271 aa).

151-158 (GVSRSGKT) contacts ADP.

Belongs to the pyruvate, phosphate/water dikinase regulatory protein family. PSRP subfamily.

The enzyme catalyses [pyruvate, water dikinase] + ADP = [pyruvate, water dikinase]-phosphate + AMP + H(+). The catalysed reaction is [pyruvate, water dikinase]-phosphate + phosphate + H(+) = [pyruvate, water dikinase] + diphosphate. Functionally, bifunctional serine/threonine kinase and phosphorylase involved in the regulation of the phosphoenolpyruvate synthase (PEPS) by catalyzing its phosphorylation/dephosphorylation. This is Putative phosphoenolpyruvate synthase regulatory protein from Paraburkholderia phytofirmans (strain DSM 17436 / LMG 22146 / PsJN) (Burkholderia phytofirmans).